The primary structure comprises 675 residues: Polyphosphate kinase (675 aa).

An ATP-binding site is contributed by N42. Mg(2+)-binding residues include R372 and R401. H431 acts as the Phosphohistidine intermediate in catalysis. Positions 464, 558, and 586 each coordinate ATP.

The protein belongs to the polyphosphate kinase 1 (PPK1) family. Mg(2+) serves as cofactor. Post-translationally, an intermediate of this reaction is the autophosphorylated ppk in which a phosphate is covalently linked to a histidine residue through a N-P bond.

The enzyme catalyses [phosphate](n) + ATP = [phosphate](n+1) + ADP. Functionally, catalyzes the reversible transfer of the terminal phosphate of ATP to form a long-chain polyphosphate (polyP). This chain is Polyphosphate kinase, found in Helicobacter pylori (strain J99 / ATCC 700824) (Campylobacter pylori J99).